We begin with the raw amino-acid sequence, 289 residues long: uncharacterized protein (289 aa).

The next 9 helical transmembrane spans lie at 13 to 32, 37 to 59, 80 to 99, 104 to 121, 141 to 160, 165 to 183, 203 to 225, 235 to 252, and 265 to 287; these read INFA…LSGS, LIIS…HLND, IVTE…IFFI, EIAL…WLYS, VFTY…TIFS, VGVV…GFFL, VLSP…FVVI, TSSL…FAIY, and IISS…AIGC.

It localises to the cell membrane. This is an uncharacterized protein from Archaeoglobus fulgidus (strain ATCC 49558 / DSM 4304 / JCM 9628 / NBRC 100126 / VC-16).